The sequence spans 168 residues: MSTSDASIIKPIQWCAIEPPNLPAAIADWLMELGSMTRRFELHCQQVHVEPQRECFISRDELGEEAEHLPISERYWLREIVLCGDNQPWLLGRTVIPEGTLSGPDRALVDLGTLPLGRYLFGGNNLTRDYIQVGRQDELWARRSLLRLSGKPLLLTEVFLPASPLYSI.

Residues methionine 36, arginine 78, leucine 116, and glutamate 157 each contribute to the substrate site.

Belongs to the UbiC family. As to quaternary structure, monomer.

It localises to the cytoplasm. It catalyses the reaction chorismate = 4-hydroxybenzoate + pyruvate. It participates in cofactor biosynthesis; ubiquinone biosynthesis. Its function is as follows. Removes the pyruvyl group from chorismate, with concomitant aromatization of the ring, to provide 4-hydroxybenzoate (4HB) for the ubiquinone pathway. The protein is Chorismate pyruvate-lyase of Yersinia enterocolitica serotype O:8 / biotype 1B (strain NCTC 13174 / 8081).